The sequence spans 397 residues: Putative odorant receptor 83c (397 aa).

The Cytoplasmic segment spans residues 1 to 39 (MSTSESPSSRFRELSKYINSLTNLLGVDFLSPKLKFNYR). A helical transmembrane segment spans residues 40–60 (TWTTIFAIANYTGFTVFTILN). The Extracellular portion of the chain corresponds to 61–70 (NGGDWRVGLK). The helical transmembrane segment at 71-90 (ASLMTGGLFHGLGKFLTCLL) threads the bilayer. At 91–136 (KHQDMRRLVLYSQSIYDEYETRGDSYHRTLNSNIDRLLGIMKIIRN) the chain is on the cytoplasmic side. A helical transmembrane segment spans residues 137 to 157 (GYVFAFCLMELLPLAMLMYDG). Topologically, residues 158–186 (TRVTAMQYLIPGLPLENNYCYVVTYMIQT) are extracellular. The chain crosses the membrane as a helical span at residues 187–207 (VTMLVQGVGFYSGDLFVFLGL). The Cytoplasmic segment spans residues 208-282 (TQILTFADML…ALYYELIATQ (75 aa)). A helical membrane pass occupies residues 283 to 299 (VLSMALAMMLSFCINLS). Residues 300 to 305 (SFHMPS) lie on the Extracellular side of the membrane. The chain crosses the membrane as a helical span at residues 306-326 (AIFFVVSAYSMSIYCILGTIL). At 327–365 (EFAYDQVYESICNVTWYELSGEQRKLFGFLLRESQYPHN) the chain is on the cytoplasmic side. A helical transmembrane segment spans residues 366–386 (IQILGVMSLSVRTALQIVKLI). The Extracellular portion of the chain corresponds to 387–397 (YSVSMMMMNRA).

This sequence belongs to the insect chemoreceptor superfamily. Heteromeric odorant receptor channel (TC 1.A.69) family. Or67d subfamily. As to quaternary structure, interacts with Orco. Complexes exist early in the endomembrane system in olfactory sensory neurons (OSNs), coupling these complexes to the conserved ciliary trafficking pathway. Expressed in olfactory sensory neurons in the antenna.

It localises to the cell membrane. Odorant receptor which mediates acceptance or avoidance behavior, depending on its substrates. The odorant receptor repertoire encodes a large collection of odor stimuli that vary widely in identity, intensity, and duration. May form a complex with Orco to form odorant-sensing units, providing sensitive and prolonged odorant signaling and calcium permeability. The chain is Putative odorant receptor 83c (Or83c) from Drosophila melanogaster (Fruit fly).